A 62-amino-acid polypeptide reads, in one-letter code: Conotoxin TeAr151 (62 aa).

Residues 1 to 22 (MRCLPVFVVLLLLIASAPSVDA) form the signal peptide. Positions 23 to 47 (QPKTKDDVPLAPLHDNIQNTLQTLR) are excised as a propeptide. At Met-55 the chain carries Methionine sulfoxide; partial. Residue Ser-60 is modified to Serine amide.

This sequence belongs to the conotoxin T superfamily. In terms of processing, contains 2 disulfide bonds. Post-translationally, contains 2 disulfide bonds that can be either 'C1-C3, C2-C4' or 'C1-C4, C2-C3', since these disulfide connectivities have been observed for conotoxins with cysteine framework V (for examples, see AC P0DQQ7 and AC P81755).. In terms of tissue distribution, expressed by the venom duct. Is mostly present in part 5 of the venom duct (distal part near the pharynx), and less abundantly present in part 4 of the venom duct.

The protein localises to the secreted. This is Conotoxin TeAr151 from Conus textile (Cloth-of-gold cone).